The following is a 233-amino-acid chain: Octanoyltransferase (233 aa).

One can recognise a BPL/LPL catalytic domain in the interval 32–213 (NNIDGILLLL…NFKMIFETDL (182 aa)). Residues 77–84 (RGGNVTYH), 144–146 (AIG), and 157–159 (GFA) contribute to the substrate site. Catalysis depends on Cys-175, which acts as the Acyl-thioester intermediate.

This sequence belongs to the LipB family.

It localises to the cytoplasm. It carries out the reaction octanoyl-[ACP] + L-lysyl-[protein] = N(6)-octanoyl-L-lysyl-[protein] + holo-[ACP] + H(+). It participates in protein modification; protein lipoylation via endogenous pathway; protein N(6)-(lipoyl)lysine from octanoyl-[acyl-carrier-protein]: step 1/2. In terms of biological role, catalyzes the transfer of endogenously produced octanoic acid from octanoyl-acyl-carrier-protein onto the lipoyl domains of lipoate-dependent enzymes. Lipoyl-ACP can also act as a substrate although octanoyl-ACP is likely to be the physiological substrate. This chain is Octanoyltransferase, found in Clostridium kluyveri (strain ATCC 8527 / DSM 555 / NBRC 12016 / NCIMB 10680 / K1).